The following is a 145-amino-acid chain: Protein SprT-like (145 aa).

The SprT-like domain occupies 5 to 140 (DYVREVSLAD…ACGRCHGRLI (136 aa)). His64 serves as a coordination point for Zn(2+). Glu65 is a catalytic residue. His68 lines the Zn(2+) pocket.

It belongs to the SprT family. Zn(2+) is required as a cofactor.

It localises to the cytoplasm. The protein is Protein SprT-like of Streptococcus equi subsp. zooepidemicus (strain MGCS10565).